Here is a 211-residue protein sequence, read N- to C-terminus: Uracil phosphoribosyltransferase (211 aa).

5-phospho-alpha-D-ribose 1-diphosphate contacts are provided by residues Arg77, Arg102, and 129–137 (DPMLATGGS). Uracil-binding positions include Ile192 and 197-199 (GDA). Residue Asp198 participates in 5-phospho-alpha-D-ribose 1-diphosphate binding.

This sequence belongs to the UPRTase family. It depends on Mg(2+) as a cofactor.

The catalysed reaction is UMP + diphosphate = 5-phospho-alpha-D-ribose 1-diphosphate + uracil. Its pathway is pyrimidine metabolism; UMP biosynthesis via salvage pathway; UMP from uracil: step 1/1. Allosterically activated by GTP. Functionally, catalyzes the conversion of uracil and 5-phospho-alpha-D-ribose 1-diphosphate (PRPP) to UMP and diphosphate. The polypeptide is Uracil phosphoribosyltransferase (Corynebacterium aurimucosum (strain ATCC 700975 / DSM 44827 / CIP 107346 / CN-1) (Corynebacterium nigricans)).